The following is a 165-amino-acid chain: uncharacterized protein (165 aa).

Positions 49–165 (QLKPQGPKRP…VAQQREIAQK (117 aa)) are disordered. Polar residues predominate over residues 94–106 (MNNNNNYKISYTS). Over residues 120 to 135 (TLQRTTPQAQPTPQQP) the composition is skewed to low complexity. The segment covering 139–157 (SRSSGGITGAVNNRPQMVA) has biased composition (polar residues).

This is an uncharacterized protein from Caenorhabditis elegans.